Reading from the N-terminus, the 155-residue chain is Probable cyclic pyranopterin monophosphate synthase (155 aa).

Residues 74–76 and 110–111 contribute to the substrate site; these read MCH and ME. D125 is an active-site residue.

The protein belongs to the MoaC family. As to quaternary structure, homohexamer; trimer of dimers.

It catalyses the reaction (8S)-3',8-cyclo-7,8-dihydroguanosine 5'-triphosphate = cyclic pyranopterin phosphate + diphosphate. The protein operates within cofactor biosynthesis; molybdopterin biosynthesis. Functionally, catalyzes the conversion of (8S)-3',8-cyclo-7,8-dihydroguanosine 5'-triphosphate to cyclic pyranopterin monophosphate (cPMP). In Methanoregula boonei (strain DSM 21154 / JCM 14090 / 6A8), this protein is Probable cyclic pyranopterin monophosphate synthase.